The chain runs to 151 residues: MGGKAKILLVNGPNLNLLGRREPGHYGHHTLDQIVKELQDESTSSGVVLEHIQSNAEHELIDAIHATEAEFIIINPAAFTHTSVALRDAILGVSIPFIEVHLSNVHAREPFRHHSYFSDKAVGVICGLGAQGYQFALQSAISRLKAKSAEH.

Catalysis depends on Y26, which acts as the Proton acceptor. Residues N75, H81, and D88 each coordinate substrate. The active-site Proton donor is the H101. Substrate is bound by residues 102 to 103 (LS) and R112.

This sequence belongs to the type-II 3-dehydroquinase family. Homododecamer.

It catalyses the reaction 3-dehydroquinate = 3-dehydroshikimate + H2O. The protein operates within metabolic intermediate biosynthesis; chorismate biosynthesis; chorismate from D-erythrose 4-phosphate and phosphoenolpyruvate: step 3/7. In terms of biological role, catalyzes a trans-dehydration via an enolate intermediate. The polypeptide is 3-dehydroquinate dehydratase (Shewanella sediminis (strain HAW-EB3)).